A 130-amino-acid polypeptide reads, in one-letter code: Con-Ins G2 (130 aa).

A signal peptide spans 1–24; that stretch reads MTTSSYFLLVALGLLLYVRQSFST. 4 cysteine pairs are disulfide-bonded: Cys29–Cys100, Cys41–Cys103, Cys53–Cys116, and Cys102–Cys107. Pro34 is subject to 4-hydroxyproline; partial. The segment at 54–74 is disordered; it reads EEEEARRGGTNDGGKKRRRAS. Positions 59-92 are cleaved as a propeptide — c peptide; the sequence is RRGGTNDGGKKRRRASPLWKRRRFLSMLKARAKR. At Glu111 the chain carries 4-carboxyglutamate; partial.

Belongs to the insulin family. Heterodimer of A and B chains; disulfide-linked. As to expression, expressed by the venom gland.

Its subcellular location is the secreted. Functionally, this venom insulin, from a fish-hunting cone snail, facilitates prey capture by rapidly inducing hypoglycemic shock. Intraperitoneal injection of this peptide into zebrafish lowers blood glucose with the same potency than human insulin. In vivo, when applied to water, this peptide reduces overall locomotor activity of zebrafish larvae, observed as a significant decrease in the percentage of time spent swimming and movement frequency. The protein is Con-Ins G2 of Conus geographus (Geography cone).